The chain runs to 127 residues: MFRTMMRAKLHRATVTEANLNYVGSITIDEDLMDAVNIVENEKVQIVNNNNGARLETYVIKGERGSGVVCLNGAAARLVQPGDKVIIICYGLVAEENIHKQEPKIAVLDDNNQIIEMLGAEKAGTIL.

S25 (schiff-base intermediate with substrate; via pyruvic acid) is an active-site residue. Pyruvic acid (Ser) is present on S25. A substrate-binding site is contributed by T57. Catalysis depends on Y58, which acts as the Proton donor. A substrate-binding site is contributed by 73 to 75 (GAA).

It belongs to the PanD family. In terms of assembly, heterooctamer of four alpha and four beta subunits. Pyruvate serves as cofactor. Post-translationally, is synthesized initially as an inactive proenzyme, which is activated by self-cleavage at a specific serine bond to produce a beta-subunit with a hydroxyl group at its C-terminus and an alpha-subunit with a pyruvoyl group at its N-terminus.

The protein localises to the cytoplasm. The catalysed reaction is L-aspartate + H(+) = beta-alanine + CO2. It participates in cofactor biosynthesis; (R)-pantothenate biosynthesis; beta-alanine from L-aspartate: step 1/1. Its function is as follows. Catalyzes the pyruvoyl-dependent decarboxylation of aspartate to produce beta-alanine. The polypeptide is Aspartate 1-decarboxylase (Bacillus cereus (strain ATCC 10987 / NRS 248)).